The chain runs to 181 residues: Adenine phosphoribosyltransferase (181 aa).

The protein belongs to the purine/pyrimidine phosphoribosyltransferase family. In terms of assembly, homodimer.

It is found in the cytoplasm. The enzyme catalyses AMP + diphosphate = 5-phospho-alpha-D-ribose 1-diphosphate + adenine. The protein operates within purine metabolism; AMP biosynthesis via salvage pathway; AMP from adenine: step 1/1. Catalyzes a salvage reaction resulting in the formation of AMP, that is energically less costly than de novo synthesis. The chain is Adenine phosphoribosyltransferase from Psychromonas ingrahamii (strain DSM 17664 / CCUG 51855 / 37).